Reading from the N-terminus, the 376-residue chain is Methionine import ATP-binding protein MetN 2 (376 aa).

A disordered region spans residues methionine 1–leucine 25. Residues valine 34 to leucine 273 form the ABC transporter domain. Residue glycine 70–serine 77 participates in ATP binding.

Belongs to the ABC transporter superfamily. Methionine importer (TC 3.A.1.24) family. As to quaternary structure, the complex is composed of two ATP-binding proteins (MetN), two transmembrane proteins (MetI) and a solute-binding protein (MetQ).

Its subcellular location is the cell inner membrane. The catalysed reaction is L-methionine(out) + ATP + H2O = L-methionine(in) + ADP + phosphate + H(+). The enzyme catalyses D-methionine(out) + ATP + H2O = D-methionine(in) + ADP + phosphate + H(+). Part of the ABC transporter complex MetNIQ involved in methionine import. Responsible for energy coupling to the transport system. This chain is Methionine import ATP-binding protein MetN 2, found in Pseudomonas syringae pv. syringae (strain B728a).